We begin with the raw amino-acid sequence, 593 residues long: Chromosomal replication initiator protein DnaA (593 aa).

Residues 1-71 (MSDPCWEQCV…EIISNSDAGP (71 aa)) are domain I, interacts with DnaA modulators. Residues 71–256 (PKSLEIAVAQ…DVEGGIQHKH (186 aa)) form a domain II region. The disordered stretch occupies residues 97–186 (AVPVPDPLPS…STESSADRER (90 aa)). Residues 113 to 124 (SFQPPKGNTSAD) are compositionally biased toward polar residues. The tract at residues 257-473 (NLNTTFIFDN…GALKRVIANA (217 aa)) is domain III, AAA+ region. Residues Gly301, Gly303, Lys304, and Thr305 each coordinate ATP. The segment at 474-593 (QFTQRSISVE…VKNLLRTLTT (120 aa)) is domain IV, binds dsDNA.

Belongs to the DnaA family. Oligomerizes as a right-handed, spiral filament on DNA at oriC.

It is found in the cytoplasm. Its function is as follows. Plays an essential role in the initiation and regulation of chromosomal replication. ATP-DnaA binds to the origin of replication (oriC) to initiate formation of the DNA replication initiation complex once per cell cycle. Binds the DnaA box (a 9 base pair repeat at the origin) and separates the double-stranded (ds)DNA. Forms a right-handed helical filament on oriC DNA; dsDNA binds to the exterior of the filament while single-stranded (ss)DNA is stabiized in the filament's interior. The ATP-DnaA-oriC complex binds and stabilizes one strand of the AT-rich DNA unwinding element (DUE), permitting loading of DNA polymerase. After initiation quickly degrades to an ADP-DnaA complex that is not apt for DNA replication. Binds acidic phospholipids. This Teredinibacter turnerae (strain ATCC 39867 / T7901) protein is Chromosomal replication initiator protein DnaA.